The primary structure comprises 312 residues: Olfactory receptor 2H2 (312 aa).

Residues 1 to 23 (MVNQSSTPGFLLLGFSEHPGLER) lie on the Extracellular side of the membrane. Residue asparagine 3 is glycosylated (N-linked (GlcNAc...) asparagine). A helical membrane pass occupies residues 24-47 (TLFVVVLTSYLLTLVGNTLIILLS). The Cytoplasmic portion of the chain corresponds to 48 to 55 (ALDPKLHS). The helical transmembrane segment at 56–77 (PMYFFLSNLSFLDLCFTTSCVP) threads the bilayer. Residues 78–98 (QMLVNLWGPKKTISFLDCSVQ) lie on the Extracellular side of the membrane. A disulfide bridge links cysteine 95 with cysteine 187. The helical transmembrane segment at 99–118 (IFIFLSLGTTECILLTVMAF) threads the bilayer. At 119–137 (DRYVAVCQPLHYATIIHPR) the chain is on the cytoplasmic side. Residues 138–156 (LCWQLASVAWVIGLVESVV) form a helical membrane-spanning segment. Residues 157-193 (QTPSTLHLPFCPDRQVDDFVCEVPALIRLSCEDTSYN) lie on the Extracellular side of the membrane. Residues 194-217 (EIQVAVASVFILVVPLSLILVSYG) form a helical membrane-spanning segment. Topologically, residues 218–234 (AITWAVLRINSAKGRRK) are cytoplasmic. Residues 235-257 (AFGTCSSHLTVVTLFYSSVIAVY) form a helical membrane-spanning segment. Residues 258-270 (LQPKNPYAQERGK) are Extracellular-facing. The chain crosses the membrane as a helical span at residues 271–290 (FFGLFYAVGTPSLNPLIYTL). Topologically, residues 291–312 (RNKEVTRAFRRLLGKEMGLTQS) are cytoplasmic.

The protein belongs to the G-protein coupled receptor 1 family.

It localises to the cell membrane. In terms of biological role, odorant receptor. The protein is Olfactory receptor 2H2 (OR2H2) of Homo sapiens (Human).